A 266-amino-acid polypeptide reads, in one-letter code: Translation initiation factor 2 subunit alpha (266 aa).

The S1 motif domain occupies Gly12–Lys83.

It belongs to the eIF-2-alpha family. As to quaternary structure, heterotrimer composed of an alpha, a beta and a gamma chain.

EIF-2 functions in the early steps of protein synthesis by forming a ternary complex with GTP and initiator tRNA. The sequence is that of Translation initiation factor 2 subunit alpha from Saccharolobus solfataricus (strain ATCC 35092 / DSM 1617 / JCM 11322 / P2) (Sulfolobus solfataricus).